The primary structure comprises 287 residues: MTAMPSFAVVTDGGLDAYPTLLNDVPVAPFSVAFGERSYPMNEVSRQWLYDELGRNPAHPTSSQPSPQQWLDAYAAVPSGTDILAVTISSGLSGSRNAAAQARDLAGRQVTLHDSMTLSAAQAFQVHAANVAAQRGESMETAIAWMNAVQAETELQFTIETLEYLRRGGRIGTVAAALGGLLNLKPVVMVDKKTGTYVNAGRARSYRGGIEAVTSQVTRKYGEGTPLRVGLLYGTHPEDADQALEQLAARHPIVWSDRTGVNPVLSVHVGPRALGVAAAPGAWPWER.

Residues Phe-7–Pro-280 form the DegV domain. The hexadecanoate site is built by Ser-62 and Ser-93.

Functionally, may bind long-chain fatty acids, such as palmitate, and may play a role in lipid transport or fatty acid metabolism. This Deinococcus radiodurans (strain ATCC 13939 / DSM 20539 / JCM 16871 / CCUG 27074 / LMG 4051 / NBRC 15346 / NCIMB 9279 / VKM B-1422 / R1) protein is DegV domain-containing protein DR_0500.